A 319-amino-acid polypeptide reads, in one-letter code: Beta-ketoacyl-[acyl-carrier-protein] synthase III (319 aa).

Residues C113 and H246 contribute to the active site. Residues 247–251 are ACP-binding; sequence QANIR. N276 is a catalytic residue.

This sequence belongs to the thiolase-like superfamily. FabH family. As to quaternary structure, homodimer.

It localises to the cytoplasm. It carries out the reaction malonyl-[ACP] + acetyl-CoA + H(+) = 3-oxobutanoyl-[ACP] + CO2 + CoA. It participates in lipid metabolism; fatty acid biosynthesis. In terms of biological role, catalyzes the condensation reaction of fatty acid synthesis by the addition to an acyl acceptor of two carbons from malonyl-ACP. Catalyzes the first condensation reaction which initiates fatty acid synthesis and may therefore play a role in governing the total rate of fatty acid production. Possesses both acetoacetyl-ACP synthase and acetyl transacylase activities. Its substrate specificity determines the biosynthesis of branched-chain and/or straight-chain of fatty acids. The protein is Beta-ketoacyl-[acyl-carrier-protein] synthase III of Ehrlichia chaffeensis (strain ATCC CRL-10679 / Arkansas).